A 318-amino-acid polypeptide reads, in one-letter code: L-lactate dehydrogenase (318 aa).

Residues Val-20, Asp-41, Lys-46, Tyr-71, and 85-86 (GA) contribute to the NAD(+) site. Residues Gln-88, Arg-94, and 126–129 (NPVD) each bind substrate. Residues 124 to 126 (ATN) and Ser-149 contribute to the NAD(+) site. 154–157 (DTAR) provides a ligand contact to substrate. Arg-159 and His-174 together coordinate beta-D-fructose 1,6-bisphosphate. The active-site Proton acceptor is His-181. Tyr-226 carries the phosphotyrosine modification. Thr-235 serves as a coordination point for substrate.

The protein belongs to the LDH/MDH superfamily. LDH family. As to quaternary structure, homotetramer.

It is found in the cytoplasm. The catalysed reaction is (S)-lactate + NAD(+) = pyruvate + NADH + H(+). It functions in the pathway fermentation; pyruvate fermentation to lactate; (S)-lactate from pyruvate: step 1/1. Allosterically activated by fructose 1,6-bisphosphate (FBP). Functionally, catalyzes the conversion of lactate to pyruvate. This Priestia megaterium (Bacillus megaterium) protein is L-lactate dehydrogenase.